The chain runs to 234 residues: Viral Fc-gamma receptor-like protein IR11 (234 aa).

Residues 1 to 23 form the signal peptide; that stretch reads MQTYSTPLTLVIVTSLFLFTTQG. The Ig-like V-type domain maps to 24–122; sequence SSSNAVEPTK…VKDTGVYLLQ (99 aa). The Extracellular segment spans residues 24–182; sequence SSSNAVEPTK…DLKRQWSGLS (159 aa). Asn57, Asn105, and Asn110 each carry an N-linked (GlcNAc...) asparagine; by host glycan. The helical transmembrane segment at 183–203 threads the bilayer; the sequence is LHCAWVSGMMIFVGALVICFL. Over 204 to 234 the chain is Cytoplasmic; the sequence is RSQRIGEQDAEHLRTDLDTEPLLLTVDGDLQ.

Belongs to the RL11 family.

It is found in the membrane. The sequence is that of Viral Fc-gamma receptor-like protein IR11 from Homo sapiens (Human).